Reading from the N-terminus, the 1484-residue chain is MIFSQGASPLKGDFSRIKFSIASPESILAHSRGEVLKPETINYRTFKPERDGLMCEKIFGPTKDWECYCGKYKRVRYKGIICDRCGVEVTTKSVRRERMGHIALAVPVVHTWFFRSVPSKIGALLDLSTKELERIIYYEVYVVINPGEPGEKQGIKKLDRLTEEQYFQIITEFEDNQDLDDSDPAKFVAKMGGEAIHLLLRNLDLDASAVHLRTILKESSSEQKRADALKRLKVVEAFRKSYEPHRKVRKKSTGLFPEDEMPEPYIYEGNKPEYMVMEAIPVIPPELRPLVPLEGGRFATSDLNDLYRRVIIRNNRLKKLIDIRAPEVILRNEKRMLQEAVDALFDNSRKANAVKTGESNRPLKSLSDSLKGKQGRFRQNLLGKRVDYSGRSVIVVGPELKLHQCGLPKSMAIELFQPFVIRRLVERGIAKSVKSAKKLIDKKDPVVWDVLEKVIDGRPVLLNRAPTLHRLGIQAFQPTLIEGKAIQLHPLVCTAFNADFDGDQMAVHVPLSQEAQLEASLLMLSSHNLILPQSGKPVTVPSQDMVLGMYYLTKSRSGGVGEGSVFYSREDVLIAHNEERVGLHTQIFIQHTGRIDQKFDPLRVLDLVVEPGTEKHTWLKSQLEQKKLILTTVGRVIFNESVPDEIGFINRVIDKKGAKELIGRLSSEVGNVETARFLDNIKQVGFFYAMKGGLSVSLSDAIVPETKAKHIKGAQRDSTRVVKEYNRGTLTDNERYNQIVDVWQKTSNIVAEESYQILKKDRAGFNPLYMMLDSGARGSREQVRQLTGMRGLIARPQKSMSGQPGEIIENPIISNLKEGLTVLEYFISTHGARKGLSDTSLKTADAGYLTRRLHDVAQDVIVTMEDCGTTRGLLIYRNIEEETSGQIKFREKIRGRVTARDIVDTITGNVIVPAGETITDAHAELIQDTPGVEEAEIRSVLTCEAKQGICSKCYGTNLSVHKPVEIGEAVGVIAAQSIGEPGTQLTLRTFHQGGTAQGGISETETKAVNEGTVQFEDIKTVDHSAINEDGVEEDSVIVIQKNGKINLVDSDSGKVLKRYVVPHGAHLACKAGDLVRKDQVLFSSEPNSTQIIAEINGTIKFADIEKGVTYKEEVDPQTGFAQHTIINWRSKLRATETREPRLMIVDETGEVRKTYPVPIKSNLYVEDGQKVVPGDIMAKVPRNLDRSGGDITAGLPKVTELFEARIPSDPAIVTEIDGYVSFGSQRRSSKEIKVKNDFGEEKVYYVQVGKHVLANEGDEVKAGDPLTDGAVSPQDILRIQGPNAVQQYLVNEIQKVYQINAGVEINDKHLEVIVRQMLQKVRVEEPGDTEMLPGDLIDRSAFLEANESVAEKVRITERGDAPARMQDEELQKLRDITKLNRELRKNGKVMIAYEPALQGTSHPVLLGITSAALQTESVISAASFQETTKVLTDAAVAGKVDHLAGLKENVIVGKLIPAGTGLKKYKTLRLIGEPEAEAPAKEDA.

Zn(2+) contacts are provided by Cys67, Cys69, Cys82, and Cys85. Mg(2+)-binding residues include Asp499, Asp501, and Asp503. Zn(2+) is bound by residues Cys867, Cys943, Cys950, and Cys953.

It belongs to the RNA polymerase beta' chain family. The RNAP catalytic core consists of 2 alpha, 1 beta, 1 beta' and 1 omega subunit. When a sigma factor is associated with the core the holoenzyme is formed, which can initiate transcription. It depends on Mg(2+) as a cofactor. Zn(2+) is required as a cofactor.

It carries out the reaction RNA(n) + a ribonucleoside 5'-triphosphate = RNA(n+1) + diphosphate. DNA-dependent RNA polymerase catalyzes the transcription of DNA into RNA using the four ribonucleoside triphosphates as substrates. This chain is DNA-directed RNA polymerase subunit beta', found in Chlorobium phaeovibrioides (strain DSM 265 / 1930) (Prosthecochloris vibrioformis (strain DSM 265)).